We begin with the raw amino-acid sequence, 477 residues long: Dihydrolipoyl dehydrogenase 3 (477 aa).

FAD-binding positions include 39–47 (EKGEYGGAC), lysine 56, and alanine 118. A disulfide bond links cysteine 47 and cysteine 52. NAD(+) contacts are provided by residues 186–190 (GAGYI), glutamate 209, and 279–282 (AVGR). FAD contacts are provided by aspartate 322 and alanine 330. Histidine 454 acts as the Proton acceptor in catalysis.

Belongs to the class-I pyridine nucleotide-disulfide oxidoreductase family. As to quaternary structure, homodimer. FAD serves as cofactor.

The protein resides in the cytoplasm. The enzyme catalyses N(6)-[(R)-dihydrolipoyl]-L-lysyl-[protein] + NAD(+) = N(6)-[(R)-lipoyl]-L-lysyl-[protein] + NADH + H(+). This chain is Dihydrolipoyl dehydrogenase 3 (lpdA3), found in Haloarcula marismortui (strain ATCC 43049 / DSM 3752 / JCM 8966 / VKM B-1809) (Halobacterium marismortui).